The sequence spans 605 residues: MSDNKGTKLDPKECCSAWLSLEAECSDSSLDGDLEKLFDEGTDSDISDLIDDGDAVQGNSRELFCQQESEESEQQTQLLKRKYISPQAVLQLSPQLESISLSPQHKPKRRLFEQDSGLECSVNEAEDLSETQVEEVPANPPTTAQGTKGLGIVKDLLKHSNVKAVLMAKFKEAFGVGFAELTRQYKSNKTCCRDWVIAVYAVNDDLIESSKQLLLQHCAYIWLHYMPPMCLYLLCFNVGKSRETVCRLLSTLLQVSEVQLLSEPPKLRSVCAALFWYKGSMNPNVYAHGAYPEWILTQTLINHQSANATQFDLSTMIQFAYDHEYFDEATIAYQYAKLAETDANARAFLQSNSQARLVKECATMVRHYMRGEMKEMSMSTWIHRKLLTVESNGQWSDIVRFIRYQDINFIEFLTVFKAFLQNKPKQNCLLFHGPPDTGKSMFTMSLISVLKGKVLSFANCKSTFWLQPIADTKLALIDDVTHVCWEYIDQYLRNGLDGNYVCLDMKHRAPCQMKFPPLMLTSNIDITKDQKYKYLHSRVKSFAFNNKFPLDANHKPQFELTDQSWKSFFKRLWTQLDLSDQEDEGEDGNSQRTFQCTARDFNGPV.

The short motif at 80-82 (KRK) is the Nuclear localization signal element. Serine 85 and serine 93 each carry phosphoserine; by host. Positions 92 to 101 (LSPQLESISL) match the Nuclear export signal motif. Residues 145-308 (QGTKGLGIVK…TLINHQSANA (164 aa)) form a DNA-binding region region. Residues 407 to 557 (INFIEFLTVF…FPLDANHKPQ (151 aa)) form the SF3 helicase domain. 433–440 (GPPDTGKS) contacts ATP. A Glycyl lysine isopeptide (Lys-Gly) (interchain with G-Cter in SUMO) cross-link involves residue lysine 514.

This sequence belongs to the papillomaviridae E1 protein family. In terms of assembly, can form hexamers. Interacts with E2 protein; this interaction increases E1 DNA binding specificity. Interacts with host DNA polymerase subunit POLA2. Interacts with host single stranded DNA-binding protein RPA1. Interacts with host TOP1; this interaction stimulates the enzymatic activity of TOP1. Phosphorylated. Post-translationally, sumoylated.

The protein localises to the host nucleus. It carries out the reaction Couples ATP hydrolysis with the unwinding of duplex DNA by translocating in the 3'-5' direction.. It catalyses the reaction ATP + H2O = ADP + phosphate + H(+). ATP-dependent DNA 3'-5' helicase required for initiation of viral DNA replication. It forms a complex with the viral E2 protein. The E1-E2 complex binds to the replication origin which contains binding sites for both proteins. During the initial step, a dimer of E1 interacts with a dimer of protein E2 leading to a complex that binds the viral origin of replication with high specificity. Then, a second dimer of E1 displaces the E2 dimer in an ATP-dependent manner to form the E1 tetramer. Following this, two E1 monomers are added to each half of the site, which results in the formation of two E1 trimers on the viral ori. Subsequently, two hexamers will be created. The double hexamer acts as a bi-directional helicase machinery and unwinds the viral DNA and then recruits the host DNA polymerase to start replication. The sequence is that of Replication protein E1 from Homo sapiens (Human).